We begin with the raw amino-acid sequence, 333 residues long: Holliday junction branch migration complex subunit RuvB (333 aa).

The interval 1 to 181 (MNDILNKEPM…FGISSHMEYY (181 aa)) is large ATPase domain (RuvB-L). ATP contacts are provided by residues leucine 20, arginine 21, glycine 62, lysine 65, threonine 66, threonine 67, 128–130 (EDF), arginine 171, tyrosine 181, and arginine 218. Mg(2+) is bound at residue threonine 66. The interval 182–252 (QERDLEEIVK…ITDKALTILD (71 aa)) is small ATPAse domain (RuvB-S). Residues 255 to 333 (AAGLDYIDQK…HLGYVYNEEE (79 aa)) form a head domain (RuvB-H) region. The DNA site is built by arginine 291, arginine 310, and arginine 315.

Belongs to the RuvB family. As to quaternary structure, homohexamer. Forms an RuvA(8)-RuvB(12)-Holliday junction (HJ) complex. HJ DNA is sandwiched between 2 RuvA tetramers; dsDNA enters through RuvA and exits via RuvB. An RuvB hexamer assembles on each DNA strand where it exits the tetramer. Each RuvB hexamer is contacted by two RuvA subunits (via domain III) on 2 adjacent RuvB subunits; this complex drives branch migration. In the full resolvosome a probable DNA-RuvA(4)-RuvB(12)-RuvC(2) complex forms which resolves the HJ.

It is found in the cytoplasm. The catalysed reaction is ATP + H2O = ADP + phosphate + H(+). Functionally, the RuvA-RuvB-RuvC complex processes Holliday junction (HJ) DNA during genetic recombination and DNA repair, while the RuvA-RuvB complex plays an important role in the rescue of blocked DNA replication forks via replication fork reversal (RFR). RuvA specifically binds to HJ cruciform DNA, conferring on it an open structure. The RuvB hexamer acts as an ATP-dependent pump, pulling dsDNA into and through the RuvAB complex. RuvB forms 2 homohexamers on either side of HJ DNA bound by 1 or 2 RuvA tetramers; 4 subunits per hexamer contact DNA at a time. Coordinated motions by a converter formed by DNA-disengaged RuvB subunits stimulates ATP hydrolysis and nucleotide exchange. Immobilization of the converter enables RuvB to convert the ATP-contained energy into a lever motion, pulling 2 nucleotides of DNA out of the RuvA tetramer per ATP hydrolyzed, thus driving DNA branch migration. The RuvB motors rotate together with the DNA substrate, which together with the progressing nucleotide cycle form the mechanistic basis for DNA recombination by continuous HJ branch migration. Branch migration allows RuvC to scan DNA until it finds its consensus sequence, where it cleaves and resolves cruciform DNA. The polypeptide is Holliday junction branch migration complex subunit RuvB (Lactococcus lactis subsp. cremoris (strain SK11)).